A 920-amino-acid chain; its full sequence is Rho GTPase-activating protein REN1 (920 aa).

Polar residues predominate over residues 1–10 (MANKNAESSS). Residues 1-64 (MANKNAESSS…SRGGNTVFKS (64 aa)) are disordered. The span at 17–31 (QPNQQQQQQPPIANE) shows a compositional bias: low complexity. Residues 45–64 (PAQSGNTDSRSRGGNTVFKS) show a composition bias toward polar residues. Positions 60-167 (TVFKSGPLSI…WKAALENALT (108 aa)) constitute a PH domain. A Rho-GAP domain is found at 213-412 (LALEDVDGAP…TLLEEYESIF (200 aa)). 3 disordered regions span residues 417–592 (LSPG…NLSM), 719–825 (RLGH…ALSK), and 837–920 (RSQI…TFSR). Over residues 434 to 463 (EGSDDEEYDDDDDGSQGSEDYTDEEEDLEN) the composition is skewed to acidic residues. Over residues 464-473 (ESNGSYSESA) the composition is skewed to polar residues. 3 stretches are compositionally biased toward basic and acidic residues: residues 475 to 491 (SEDK…HKIN), 499 to 509 (KSPKRSKEPKK), and 520 to 532 (PRHD…EDIV). The span at 555–568 (SSTSDVASDTQKPS) shows a compositional bias: polar residues. Residues 577-586 (SKRHWGRTPG) are compositionally biased toward basic residues. Positions 598 to 728 (SVEVDEDNAD…RLGHHDGKAS (131 aa)) form a coiled coil. 2 stretches are compositionally biased toward basic and acidic residues: residues 734 to 768 (ASKE…RSTS) and 776 to 788 (RENE…DSRS). Residues 814 to 825 (EGSTTTTSALSK) show a composition bias toward low complexity. Composition is skewed to polar residues over residues 854–864 (GQPSPTSGQNR) and 872–885 (GSGS…SKLQ). A compositionally biased stretch (basic and acidic residues) spans 889–903 (ILDRGRSENGGDRGR). Residues 910 to 920 (HPNTTPRTFSR) are compositionally biased toward polar residues.

In terms of assembly, interacts with ARAC11/ROP1. As to expression, expressed in pollen and pollen tubes.

It is found in the cell membrane. Acts as a GTPase activator for the Rac-type GTPase by converting it to an inactive GDP-bound state. Maintains the global inactivation of ARAC11/ROP1 at the apex in pollen tubes in order to regulate the polar cell growth. The chain is Rho GTPase-activating protein REN1 (REN1) from Arabidopsis thaliana (Mouse-ear cress).